The sequence spans 376 residues: Queuine tRNA-ribosyltransferase (376 aa).

Aspartate 90 serves as the catalytic Proton acceptor. Residues 90–94 (DSGGF), aspartate 144, glutamine 193, and glycine 220 contribute to the substrate site. The interval 251-257 (GVGTPED) is RNA binding. Catalysis depends on aspartate 270, which acts as the Nucleophile. The RNA binding; important for wobble base 34 recognition stretch occupies residues 275-279 (TRNAR). Residues cysteine 308, cysteine 310, cysteine 313, and histidine 339 each contribute to the Zn(2+) site.

The protein belongs to the queuine tRNA-ribosyltransferase family. Homodimer. Within each dimer, one monomer is responsible for RNA recognition and catalysis, while the other monomer binds to the replacement base PreQ1. The cofactor is Zn(2+).

It catalyses the reaction 7-aminomethyl-7-carbaguanine + guanosine(34) in tRNA = 7-aminomethyl-7-carbaguanosine(34) in tRNA + guanine. Its pathway is tRNA modification; tRNA-queuosine biosynthesis. Its function is as follows. Catalyzes the base-exchange of a guanine (G) residue with the queuine precursor 7-aminomethyl-7-deazaguanine (PreQ1) at position 34 (anticodon wobble position) in tRNAs with GU(N) anticodons (tRNA-Asp, -Asn, -His and -Tyr). Catalysis occurs through a double-displacement mechanism. The nucleophile active site attacks the C1' of nucleotide 34 to detach the guanine base from the RNA, forming a covalent enzyme-RNA intermediate. The proton acceptor active site deprotonates the incoming PreQ1, allowing a nucleophilic attack on the C1' of the ribose to form the product. After dissociation, two additional enzymatic reactions on the tRNA convert PreQ1 to queuine (Q), resulting in the hypermodified nucleoside queuosine (7-(((4,5-cis-dihydroxy-2-cyclopenten-1-yl)amino)methyl)-7-deazaguanosine). This Cupriavidus metallidurans (strain ATCC 43123 / DSM 2839 / NBRC 102507 / CH34) (Ralstonia metallidurans) protein is Queuine tRNA-ribosyltransferase.